A 212-amino-acid polypeptide reads, in one-letter code: Ropporin-1B (212 aa).

The RIIa domain maps to 12 to 49 (PELPKMLKEFAKAAIRAQPQDLIQWGADYFEALSRGET). The residue at position 56 (Ser-56) is a Phosphoserine. Residues 209 to 212 (VWLE) are interaction with RHPN1.

This sequence belongs to the ropporin family. As to quaternary structure, homodimer. Interacts with RHPN1. May interact with SPA17. Interacts with AKAP3. Interacts with FSCB; the interaction increases upon spermatozoa capacitation conditions. Sumoylated, sumoylation decreases upon spermatozoa capacitation conditions.

It localises to the cell projection. The protein localises to the cilium. Its subcellular location is the flagellum. Functionally, important for male fertility. With ROPN1L, involved in fibrous sheath integrity and sperm motility, plays a role in PKA-dependent signaling processes required for spermatozoa capacitation. In Homo sapiens (Human), this protein is Ropporin-1B (ROPN1B).